The primary structure comprises 398 residues: Vacuolar protease A (398 aa).

A signal peptide spans 1–18; sequence MKSTSLLTASVLLGSASA. Residues 19-70 constitute a propeptide, activation peptide; sequence AVHKLKLNKVPLDEQLYTHNIDAHVRALGQKYMGIRPNVHQELLEENSLNDM. The Peptidase A1 domain maps to 85–395; the sequence is YFSEISLGTP…DLGNNAVGLA (311 aa). The active site involves Asp-103. The cysteines at positions 116 and 121 are disulfide-linked. Asn-138 is a glycosylation site (N-linked (GlcNAc...) asparagine). Asp-287 is a catalytic residue. An intrachain disulfide couples Cys-321 to Cys-354. Asn-338 is a glycosylation site (N-linked (GlcNAc...) asparagine).

It belongs to the peptidase A1 family.

The protein resides in the vacuole lumen. It localises to the secreted. The enzyme catalyses Hydrolysis of proteins with broad specificity for peptide bonds. Cleaves -Leu-Leu-|-Val-Tyr- bond in a synthetic substrate. Does not act on esters of Tyr or Arg.. Its function is as follows. Vacuolar aspartic endopeptidase which is probably also secreted and contributes to virulence. This Aspergillus fumigatus (strain ATCC MYA-4609 / CBS 101355 / FGSC A1100 / Af293) (Neosartorya fumigata) protein is Vacuolar protease A (pep2).